Reading from the N-terminus, the 539-residue chain is Chaperonin GroEL (539 aa).

ATP contacts are provided by residues Thr-29–Pro-32, Asp-86–Thr-90, Gly-414, and Asp-493.

Belongs to the chaperonin (HSP60) family. In terms of assembly, forms a cylinder of 14 subunits composed of two heptameric rings stacked back-to-back. Interacts with the co-chaperonin GroES.

Its subcellular location is the cytoplasm. The catalysed reaction is ATP + H2O + a folded polypeptide = ADP + phosphate + an unfolded polypeptide.. Its function is as follows. Together with its co-chaperonin GroES, plays an essential role in assisting protein folding. The GroEL-GroES system forms a nano-cage that allows encapsulation of the non-native substrate proteins and provides a physical environment optimized to promote and accelerate protein folding. In Staphylococcus aureus, this protein is Chaperonin GroEL.